The primary structure comprises 324 residues: Fructose-1,6-bisphosphatase class 1 (324 aa).

The Mg(2+) site is built by E88, D107, L109, and D110. Substrate is bound by residues 110–113, N199, and K265; that span reads DGSS. Position 271 (E271) interacts with Mg(2+).

The protein belongs to the FBPase class 1 family. Homotetramer. Requires Mg(2+) as cofactor.

The protein localises to the cytoplasm. It carries out the reaction beta-D-fructose 1,6-bisphosphate + H2O = beta-D-fructose 6-phosphate + phosphate. It participates in carbohydrate biosynthesis; gluconeogenesis. This Neisseria meningitidis serogroup B (strain ATCC BAA-335 / MC58) protein is Fructose-1,6-bisphosphatase class 1.